The chain runs to 560 residues: DNA ligase B (560 aa).

K124 functions as the N6-AMP-lysine intermediate in the catalytic mechanism.

Belongs to the NAD-dependent DNA ligase family. LigB subfamily.

The enzyme catalyses NAD(+) + (deoxyribonucleotide)n-3'-hydroxyl + 5'-phospho-(deoxyribonucleotide)m = (deoxyribonucleotide)n+m + AMP + beta-nicotinamide D-nucleotide.. In terms of biological role, catalyzes the formation of phosphodiester linkages between 5'-phosphoryl and 3'-hydroxyl groups in double-stranded DNA using NAD as a coenzyme and as the energy source for the reaction. This Shigella flexneri serotype 5b (strain 8401) protein is DNA ligase B.